A 225-amino-acid polypeptide reads, in one-letter code: Suppressor of cytokine signaling 3 (225 aa).

The kinase inhibitory region (KIR) stretch occupies residues 22–33 (LKTFSSKSEYQL). Residues 34–45 (VVNAVRKLQESG) are extended SH2 subdomain (ESS). An SH2 domain is found at 46-142 (FYWSAVTGGE…APSFSLPPTE (97 aa)). Residues 141–160 (TEPSFEVQEQPPAQALPGGT) form a disordered region. In terms of domain architecture, SOCS box spans 177 to 224 (VLSRPLSSNVATLQHLCRKTVNGHLDSYEKVTQLPGPIREFLDQYDAP).

Interacts with multiple activated proteins of the tyrosine kinase signaling pathway including IGF1 receptor, insulin receptor and JAK2. Binding to JAK2 is mediated through the KIR and SH2 domains to a phosphorylated tyrosine residue within the JAK2 JH1 domain. Binds specific activated tyrosine residues of the leptin, EPO, IL12, GSCF and gp130 receptors. Interaction with CSNK1E stabilize SOCS3 protein. Component of the probable ECS(SOCS3) E3 ubiquitin-protein ligase complex which contains CUL5, RNF7/RBX2, Elongin BC complex and SOCS3. Interacts with CUL5, RNF7, ELOB and ELOC. Interacts with FGFR3. Interacts with INSR. Interacts with BCL10; this interaction may interfere with BCL10-binding with PELI2. Interacts with NOD2 (via CARD domain); the interaction promotes NOD2 degradation. Phosphorylated on tyrosine residues after stimulation by the cytokines, IL-2, EPO or IGF1.

Its pathway is protein modification; protein ubiquitination. SOCS family proteins form part of a classical negative feedback system that regulates cytokine signal transduction. SOCS3 is involved in negative regulation of cytokines that signal through the JAK/STAT pathway. Inhibits cytokine signal transduction by binding to tyrosine kinase receptors including IL6ST/gp130, LIF, erythropoietin, insulin, IL12, GCSF and leptin receptors. Binding to JAK2 inhibits its kinase activity and regulates IL6 signaling. Suppresses fetal liver erythropoiesis. Regulates onset and maintenance of allergic responses mediated by T-helper type 2 cells. Probable substrate recognition component of a SCF-like ECS (Elongin BC-CUL2/5-SOCS-box protein) E3 ubiquitin-protein ligase complex which mediates the ubiquitination and subsequent proteasomal degradation of target proteins. The chain is Suppressor of cytokine signaling 3 from Rattus norvegicus (Rat).